We begin with the raw amino-acid sequence, 352 residues long: Mannonate dehydratase (352 aa).

The protein belongs to the mannonate dehydratase family. The cofactor is Fe(2+). Mn(2+) is required as a cofactor.

It carries out the reaction D-mannonate = 2-dehydro-3-deoxy-D-gluconate + H2O. Its pathway is carbohydrate metabolism; pentose and glucuronate interconversion. Its function is as follows. Catalyzes the dehydration of D-mannonate. The sequence is that of Mannonate dehydratase from Paraburkholderia phytofirmans (strain DSM 17436 / LMG 22146 / PsJN) (Burkholderia phytofirmans).